The sequence spans 631 residues: tRNA uridine 5-carboxymethylaminomethyl modification enzyme MnmG (631 aa).

FAD-binding positions include 13 to 18, valine 125, and serine 180; that span reads GGGHAG. 273–287 contributes to the NAD(+) binding site; that stretch reads GPRYCPSIEDKVMRF. Glutamine 370 is a binding site for FAD.

Belongs to the MnmG family. Homodimer. Heterotetramer of two MnmE and two MnmG subunits. It depends on FAD as a cofactor.

The protein resides in the cytoplasm. In terms of biological role, NAD-binding protein involved in the addition of a carboxymethylaminomethyl (cmnm) group at the wobble position (U34) of certain tRNAs, forming tRNA-cmnm(5)s(2)U34. The chain is tRNA uridine 5-carboxymethylaminomethyl modification enzyme MnmG from Vibrio campbellii (strain ATCC BAA-1116).